The following is a 200-amino-acid chain: Small ribosomal subunit protein uS4c (200 aa).

Positions Ile88–Cys148 constitute an S4 RNA-binding domain.

The protein belongs to the universal ribosomal protein uS4 family. Part of the 30S ribosomal subunit.

It is found in the plastid. The protein resides in the apicoplast. One of the primary rRNA binding proteins, it binds directly to 16S rRNA where it nucleates assembly of the body of the 30S subunit. This is Small ribosomal subunit protein uS4c (rps4) from Eimeria tenella (Coccidian parasite).